We begin with the raw amino-acid sequence, 1336 residues long: Zinc finger protein 335 (1336 aa).

Disordered stretches follow at residues 1–108 (MEEN…LVHS) and 199–222 (PTSTSTCLEPAEQPPGEPSSLAQP). Composition is skewed to low complexity over residues 31 to 45 (TSEAVSADSTDAATA) and 54 to 65 (SGVGQSSDSGSR). The C2H2-type 1 zinc-finger motif lies at 247–270 (FKCKMCQYRSSTKATLLRHMRERH). 2 disordered regions span residues 282–398 (AGKR…PSSS) and 415–442 (VSQSDAENAAPSCQDEADVPPRRRGRPS). Acidic residues predominate over residues 300-331 (EEGPEEEEEDDDIVDAGAIDDLEEDSDYNPAE). Positions 339–349 (LRLQRPTPSTL) are enriched in low complexity. Residues 350–361 (RPRRRPGRPRKL) show a composition bias toward basic residues. Residues 362–373 (PRLETSDLHDGI) show a composition bias toward basic and acidic residues. Polar residues predominate over residues 378 to 387 (VSSQSTQSPP). 8 consecutive C2H2-type zinc fingers follow at residues 465–487 (YLCRICGSRFLSHEDLRFHVNSH), 495–517 (FKCLQCSYRSRRWSSLKEHMFNH), 523–545 (YKCDECSYTSVYRKDVIRHAAVH), 562–584 (FPCPVCGRVYPMQKRLTQHMKTH), 590–612 (HMCDKCGKSFKKRYTFKMHLLTH), 621–643 (FKCEFCEFVCEDKKALLNHQLSH), 649–672 (FKCSFCPYRTFREDFLLSHVAVKH), and 678–701 (FACEYCHFSTRHKKNLRLHVRCRH). Disordered regions lie at residues 732–766 (LKQQHSAAPGPPLSSAGPEAPQEPAPFQPPETPPL) and 961–1013 (LQCG…AAAS). The segment covering 752 to 766 (PQEPAPFQPPETPPL) has biased composition (pro residues). A phosphoserine mark is found at serine 975 and serine 1006. 4 consecutive C2H2-type zinc fingers follow at residues 1018-1040 (FSCKVCSEAFPSRAEMESHKRAH), 1046-1068 (FKCPDCPFSARQWPEVRAHMAQH), 1074-1096 (HQCNQCSFASKNKKDLRRHMLTH), and 1102-1125 (FSCHVCGQRFNRNGHLKFHIQRLH). A Glycyl lysine isopeptide (Lys-Gly) (interchain with G-Cter in SUMO2) cross-link involves residue lysine 1021. Residue serine 1148 is modified to Phosphoserine.

It belongs to the krueppel C2H2-type zinc-finger protein family. As to quaternary structure, interacts with NCOA6; may enhance ligand-dependent transcriptional activation by nuclear hormone receptors. Interacts with CNOT6. Interacts with CNOT9; the interaction is direct. Component of a nuclear receptor-mediated transcription complex composed of at least ZNF335, CCAR2 and EMSY; the complex stimulates the transcription of nuclear receptor target genes such as SOX9 and HOXA1. Within the complex interacts with EMSY and interacts (via C-terminus) with CCAR2. Interacts with members of histone H3'Lys4'(H3K4) methyltransferase complexes ASH2L, CXXC1, KMT2A/MLL1, RBBP5, SETD1A and WDR5. Component of a histone methylation complex composed of at least ZNF335, RBBP5, ASH2L and WDR5; the complex may have histone H3-specific methyltransferase activity, however does not have specificity for 'Lys-4' of histone H3. Interacts with RBBP5 and WDR5. Interacts with ASHL2. Components of this complex may associate with components of the ZNF335-CCAR2-EMSY nuclear receptor-mediated transcription complex to form a complex at least composed of ZNF335, HCFC1, CCAR2, EMSY, MKI67, RBBP5, ASH2L and WDR5. Within this complex also interacts with HCFC1 and MKI67.

It is found in the nucleus. Functionally, component or associated component of some histone methyltransferase complexes may regulate transcription through recruitment of those complexes on gene promoters. Enhances ligand-dependent transcriptional activation by nuclear hormone receptors. Plays an important role in neural progenitor cell proliferation and self-renewal through the regulation of specific genes involved brain development, including REST. Also controls the expression of genes involved in somatic development and regulates, for instance, lymphoblast proliferation. The chain is Zinc finger protein 335 (Znf335) from Rattus norvegicus (Rat).